A 91-amino-acid chain; its full sequence is uncharacterized protein (91 aa).

The signal sequence occupies residues 1 to 25 (MLLQRIGIEHLRIWILLLLISLVPA).

This is an uncharacterized protein from Caenorhabditis elegans.